Consider the following 436-residue polypeptide: 3-ketoacyl-CoA thiolase (436 aa).

Residue Cys99 is the Acyl-thioester intermediate of the active site. Active-site proton acceptor residues include His392 and Cys422.

This sequence belongs to the thiolase-like superfamily. Thiolase family. As to quaternary structure, heterotetramer of two alpha chains (FadJ) and two beta chains (FadI).

Its subcellular location is the cytoplasm. The enzyme catalyses an acyl-CoA + acetyl-CoA = a 3-oxoacyl-CoA + CoA. It functions in the pathway lipid metabolism; fatty acid beta-oxidation. Functionally, catalyzes the final step of fatty acid oxidation in which acetyl-CoA is released and the CoA ester of a fatty acid two carbons shorter is formed. The protein is 3-ketoacyl-CoA thiolase of Salmonella newport (strain SL254).